Reading from the N-terminus, the 2311-residue chain is C2 domain-containing protein 3 (2311 aa).

Disordered stretches follow at residues 447 to 511 (SDSS…TSRC) and 543 to 562 (GTAV…RPVR). Basic and acidic residues predominate over residues 470-509 (IALDRGRHRDNSPSEYKEDAKQTKGNDSLRDSKTSEKSTS). 6 consecutive C2 domains span residues 508-666 (TSRC…SVTC), 751-888 (GNGG…TRLL), 952-1112 (LDPP…HRED), 1136-1303 (PSGL…SGWY), 1370-1505 (HKRE…TLAV), and 1581-1713 (KTEV…CGWY). The segment at 939 to 964 (GTSQTAMPRPAHFLDPPLSSSQMGRP) is disordered. 5 disordered regions span residues 1536–1589 (PSNS…LLDA), 1955–1977 (SEAY…GSLN), 2036–2065 (MTDR…PVNP), 2084–2233 (NDPS…SNLL), and 2261–2292 (VREG…PKEE). Basic and acidic residues-rich tracts occupy residues 1565-1589 (FEEK…LLDA) and 1955-1964 (SEAYEREGQR). Residues 2036-2047 (MTDRTSPWSSIL) are compositionally biased toward polar residues. Residues 2048 to 2059 (SERDSDSMDHPQ) are compositionally biased toward basic and acidic residues. Residues 2084–2095 (NDPSSVLSSARS) are compositionally biased toward polar residues. Residues 2138–2151 (AESEAESQEMDGDP) are compositionally biased toward acidic residues. Over residues 2221-2233 (GSESPQVPPSNLL) the composition is skewed to polar residues.

The protein localises to the cytoplasm. Its subcellular location is the cytoskeleton. The protein resides in the cilium basal body. It is found in the microtubule organizing center. It localises to the centrosome. The protein localises to the centriole. In terms of biological role, component of the centrioles that acts as a positive regulator of centriole elongation. Promotes assembly of centriolar distal appendage, a structure at the distal end of the mother centriole that acts as an anchor of the cilium. Required for primary cilium formation. The protein is C2 domain-containing protein 3 (c2cd3) of Xenopus tropicalis (Western clawed frog).